Reading from the N-terminus, the 273-residue chain is Multidrug-efflux transporter 2 regulator (273 aa).

An HTH merR-type domain is found at 8 to 77 (YFTTGEFSKL…LKEIKCLIKG (70 aa)). Residues 11 to 30 (TGEFSKLCRVKKQTLFHYDE) constitute a DNA-binding region (H-T-H motif).

Functionally, activates transcription of the blt gene in response to structurally dissimilar drugs. This chain is Multidrug-efflux transporter 2 regulator (bltR), found in Bacillus subtilis (strain 168).